Consider the following 462-residue polypeptide: Notoamide biosynthesis cluster protein O' (462 aa).

Helical transmembrane passes span 16–36 (IFNV…WAAM), 55–75 (AVIF…IAKI), and 79–99 (WAFA…YCNV). Residue Asn102 is glycosylated (N-linked (GlcNAc...) asparagine). Transmembrane regions (helical) follow at residues 104–124 (SWYI…FWLT), 143–163 (AYWL…TLGV), 173–193 (ISVQ…FVAA), and 233–253 (ILLL…FSTY). N-linked (GlcNAc...) asparagine glycosylation occurs at Asn254. 4 helical membrane passes run 265-285 (LSSL…GFFL), 297-317 (MAAF…AMVV), 343-363 (VYIL…WLIG), and 404-424 (AVAV…FVIY). Residues 443-462 (LQTSGEGSHDIMDANGKSDD) are disordered. The span at 449–462 (GSHDIMDANGKSDD) shows a compositional bias: basic and acidic residues.

The protein belongs to the unc-93 family.

The protein localises to the membrane. Part of the gene cluster that mediates the biosynthesis of notoamide, a fungal indole alkaloid that belongs to a family of natural products containing a characteristic bicyclo[2.2.2]diazaoctane core. The first step of notoamide biosynthesis involves coupling of L-proline and L-tryptophan by the bimodular NRPS notE', to produce cyclo-L-tryptophan-L-proline called brevianamide F. The reverse prenyltransferase notF' then acts as a deoxybrevianamide E synthase and converts brevianamide F to deoxybrevianamide E via reverse prenylation at C-2 of the indole ring leading to the bicyclo[2.2.2]diazaoctane core. Deoxybrevianamide E is further hydroxylated at C-6 of the indole ring, likely catalyzed by the cytochrome P450 monooxygenase notG', to yield 6-hydroxy-deoxybrevianamide E. 6-hydroxy-deoxybrevianamide E is a specific substrate of the prenyltransferase notC' for normal prenylation at C-7 to produce 6-hydroxy-7-prenyl-deoxybrevianamide, also called notoamide S. As the proposed pivotal branching point in notoamide biosynthesis, notoamide S can be diverted to notoamide E through an oxidative pyran ring closure putatively catalyzed by either notH' cytochrome P450 monooxygenase or the notD' FAD-linked oxidoreductase. This step would be followed by an indole 2,3-epoxidation-initiated pinacol-like rearrangement catalyzed by the notB' FAD-dependent monooxygenase leading to the formation of notoamide C and notoamide D. On the other hand notoamide S is converted to notoamide T by notH' (or notD'), a bifunctional oxidase that also functions as the intramolecular Diels-Alderase responsible for generation of (-)-notoamide T. To generate antipodal (+)-notoaminide T, notH (or notD) in Aspergillus strain MF297-2 is expected to catalyze a Diels-Alder reaction leading to the opposite stereochemistry. The remaining oxidoreductase notD' (or notH') likely catalyzes the oxidative pyran ring formation to yield (-)-stephacidin A. The FAD-dependent monooxygenase notI' is highly similar to notB' and is predicted to catalyze a similar conversion from (-)-stephacidin A to (+)-notoamide B via the 2,3-epoxidation of (-)-stephacidin A followed by a pinacol-type rearrangement. Finally, it remains unclear which enzyme could be responsible for the final hydroxylation steps leading to notoamide A and sclerotiamide. The function of notO' in the notoamide biosynthesis has not been determined yet. In Aspergillus versicolor, this protein is Notoamide biosynthesis cluster protein O'.